The primary structure comprises 196 residues: Lipoprotein signal peptidase (196 aa).

A run of 3 helical transmembrane segments spans residues 43 to 63, 75 to 95, and 97 to 117; these read LMLK…GISF, AIFL…MICS, and TIGS…NLID. Catalysis depends on residues aspartate 126 and aspartate 144. Residues 135–155 traverse the membrane as a helical segment; the sequence is YSFPVFNLADCFITLGVIILI.

Belongs to the peptidase A8 family.

The protein resides in the cell inner membrane. The enzyme catalyses Release of signal peptides from bacterial membrane prolipoproteins. Hydrolyzes -Xaa-Yaa-Zaa-|-(S,diacylglyceryl)Cys-, in which Xaa is hydrophobic (preferably Leu), and Yaa (Ala or Ser) and Zaa (Gly or Ala) have small, neutral side chains.. Its pathway is protein modification; lipoprotein biosynthesis (signal peptide cleavage). In terms of biological role, this protein specifically catalyzes the removal of signal peptides from prolipoproteins. This Rickettsia typhi (strain ATCC VR-144 / Wilmington) protein is Lipoprotein signal peptidase.